The primary structure comprises 228 residues: MLYGFSGVILQGAIVTLELALSSVVLAVLIGLVGAGAKLSQNRVTGLIFEGYTTLIRGVPDLVLMLLIFYGLQIALNVVTDSLGIDQIDIDPMVAGIITLGFIYGAYFTETFRGAFMAVPKGHIEAATAFGFTHGQTFRRIMFPAMMRYALPGIGNNWQVILKATALVSLLGLEDVVKATQLAGKSTWEPFYFAVVCGLIYLVFTTVSNGVLLLLERRYSVGVKRADL.

Topologically, residues Met1 to Gly12 are periplasmic. Residues Ala13–Val33 traverse the membrane as a helical segment. One can recognise an ABC transmembrane type-1 domain in the interval Ala13–Leu212. Residues Gly34–Gly58 are Cytoplasmic-facing. Residues Val59 to Val79 form a helical membrane-spanning segment. Residues Thr80–Gln87 lie on the Periplasmic side of the membrane. The helical transmembrane segment at Ile88 to Phe108 threads the bilayer. The Cytoplasmic segment spans residues Thr109–Pro152. The chain crosses the membrane as a helical span at residues Gly153–Leu173. Residues Glu174 to Ala194 lie on the Periplasmic side of the membrane. Residues Val195–Leu215 traverse the membrane as a helical segment. At Glu216–Leu228 the chain is on the cytoplasmic side.

It belongs to the binding-protein-dependent transport system permease family. HisMQ subfamily. As to quaternary structure, the HisPMQJ complex is composed of two ATP-binding proteins (HisP), two transmembrane proteins (HisM and HisQ) and a solute-binding protein (HisJ). The HisPMQ-ArgT complex is composed of two ATP-binding proteins (HisP), two transmembrane proteins (HisM and HisQ) and a solute-binding protein (ArgT).

It is found in the cell inner membrane. In terms of biological role, part of the ABC transporter complex HisPMQJ involved in histidine transport. Is also part of the ABC transporter complex HisPMQ-ArgT involved in lysine/arginine/ornithine transport. Probably responsible for the translocation of the substrate across the membrane. The polypeptide is Histidine/lysine/arginine/ornithine transport system permease protein HisQ (hisQ) (Salmonella typhi).